A 284-amino-acid chain; its full sequence is MRKRIWVGLPLALVFGGIFAFHTVFHIPEQPEMTTISDGSFNQQLHCYESSTRASIDQEGRLNLLVWNIYKQNRANWQSVLTQMSAGAQLILLQEASLEDGLKRWIASGGWSGEQVNAFKAFDKAAGVLTLGWRKPRLACGYTQLEPWIRLPKSGLYSEYPLSDGQMLIVVNLHAVNFTWGVQEYQQQVNDLIAALKEHPGPAIVAGDFNTWSEKRLQAVTERLENAGLIEVVFSPDQRTRFITGLPLDHVFYKGLEVQKAEAPQTDASDHNPLLVSFTLPTDK.

The protein belongs to the UPF0294 family.

Its subcellular location is the cytoplasm. This is UPF0294 protein VV2535 from Vibrio vulnificus (strain YJ016).